Consider the following 192-residue polypeptide: Phosphoheptose isomerase (192 aa).

Residues 37 to 192 (LADSFKGGGK…IQLIEKEMVK (156 aa)) form the SIS domain. Residue 52–54 (NGG) coordinates substrate. Positions 61 and 65 each coordinate Zn(2+). Substrate contacts are provided by residues glutamate 65, 93–94 (ND), 119–121 (STS), serine 124, and glutamine 172. Glutamine 172 and histidine 180 together coordinate Zn(2+).

Belongs to the SIS family. GmhA subfamily. As to quaternary structure, homotetramer. Requires Zn(2+) as cofactor.

Its subcellular location is the cytoplasm. It catalyses the reaction 2 D-sedoheptulose 7-phosphate = D-glycero-alpha-D-manno-heptose 7-phosphate + D-glycero-beta-D-manno-heptose 7-phosphate. Its pathway is carbohydrate biosynthesis; D-glycero-D-manno-heptose 7-phosphate biosynthesis; D-glycero-alpha-D-manno-heptose 7-phosphate and D-glycero-beta-D-manno-heptose 7-phosphate from sedoheptulose 7-phosphate: step 1/1. Its function is as follows. Catalyzes the isomerization of sedoheptulose 7-phosphate in D-glycero-D-manno-heptose 7-phosphate. This Escherichia coli O7:K1 (strain IAI39 / ExPEC) protein is Phosphoheptose isomerase.